The chain runs to 230 residues: MASADELKQAAAQAAAQKVQSGMVVGLGTGSTAAFAVGALAQRMQKEGLQFIGVPTSERTAEQARSLGIPLATLEEQPRLDLAIDGADEIEVGSLNLIKGAGGALLREKLVEASAAELIIIADASKKVAHLGTRFPVPVEVVRFGWKTTLARVEALGCQAVLRRTAEGDPYLTDEQHYILDCQFGPIANPAKLAEQLKGTVGVVEHGLFIGMATEAIIAGPEGIETLRQS.

Substrate contacts are provided by residues 29-32 (TGST), 85-88 (DGAD), and 99-102 (KGAG). E108 serves as the catalytic Proton acceptor. K126 is a binding site for substrate.

The protein belongs to the ribose 5-phosphate isomerase family. As to quaternary structure, homodimer.

The enzyme catalyses aldehydo-D-ribose 5-phosphate = D-ribulose 5-phosphate. It participates in carbohydrate degradation; pentose phosphate pathway; D-ribose 5-phosphate from D-ribulose 5-phosphate (non-oxidative stage): step 1/1. Its function is as follows. Catalyzes the reversible conversion of ribose-5-phosphate to ribulose 5-phosphate. This Synechococcus sp. (strain JA-3-3Ab) (Cyanobacteria bacterium Yellowstone A-Prime) protein is Ribose-5-phosphate isomerase A.